A 486-amino-acid chain; its full sequence is MAGLFFKPGLLPWYARNPPGWSQLFLGTVCKGDFTRVIATKCQKGQKSQKKPSHLGPLDGSWQERLADVVTPLWRLSYEEQLKVKFAAQKKILQRLESYIQMLNGVSVTTAVPKSERLSCLLHPIIPSPVINGYRNKSTFSVNRGPDGNPKTVGFYLGTWRDGNMVCVQSNHLKNIPEKHSQVAQYYEVFLRQSPLEPCLVFHEGGYWRELTVRTNSQGHTMAIITFHPQNLSQEEFHVQKEIVKEFFIRGPGAACDLTSLYFQESTMTRCSHQQSPYQLLFGEPYIFEELLSLKIRISPDAFFQINTAGAEMLYRTVGELTGVNSDTILLDICCGTGVIGLSLSQHTSRVLGIELVEQAVEDARWTAAFNGITNSEFHTGRAEKILPGLLKSKEDGQSIVAVVNPARAGLHYKVIQAIRNFRAIHTLVFVSCKLHGESTRNVIELCCPPDPAKKLLGEPFVLQQVVPVDLFPHTPHCELVLLFTR.

Residues Gln305, Glu355, and Asn405 each contribute to the S-adenosyl-L-methionine site. Cys433 serves as the catalytic Nucleophile. The active-site Proton acceptor is Glu479.

This sequence belongs to the class I-like SAM-binding methyltransferase superfamily. RNA M5U methyltransferase family.

The protein resides in the mitochondrion matrix. The enzyme catalyses uridine(54) in tRNA + S-adenosyl-L-methionine = 5-methyluridine(54) in tRNA + S-adenosyl-L-homocysteine + H(+). It carries out the reaction a uridine in 12S rRNA + S-adenosyl-L-methionine = a 5-methyluridine in 12S rRNA + S-adenosyl-L-homocysteine + H(+). Functionally, mitochondrial S-adenosyl-L-methionine-dependent methyltransferase that catalyzes the formation of 5-methyl-uridine in tRNAs and 12S rRNA. Catalyzes the methylation of uridine at position 54 (m5U54) in all tRNAs. Specifically methylates the uridine in position 429 of 12S rRNA (m5U429). Does not affect RNA stability or mitochondrial translation. The sequence is that of tRNA (uracil-5-)-methyltransferase homolog B (TRMT2B) from Pongo abelii (Sumatran orangutan).